The chain runs to 557 residues: Formate--tetrahydrofolate ligase (557 aa).

Position 66-73 (66-73 (TPAGEGKS)) interacts with ATP.

It belongs to the formate--tetrahydrofolate ligase family.

It carries out the reaction (6S)-5,6,7,8-tetrahydrofolate + formate + ATP = (6R)-10-formyltetrahydrofolate + ADP + phosphate. It functions in the pathway one-carbon metabolism; tetrahydrofolate interconversion. The sequence is that of Formate--tetrahydrofolate ligase from Clostridium botulinum (strain ATCC 19397 / Type A).